The primary structure comprises 265 residues: Aquaporin-5 (265 aa).

Topologically, residues 1 to 12 (MKKEVCSVAFLK) are cytoplasmic. A helical membrane pass occupies residues 13-33 (AVFAEFLATLIFVFFGLGSAL). The Extracellular portion of the chain corresponds to 34-39 (KWPSAL). The chain crosses the membrane as a helical span at residues 40–60 (PTILQIALAFGLAIGTLAQAL). The Cytoplasmic portion of the chain corresponds to 61 to 65 (GPVSG). The segment at residues 66–74 (GHINPAITL) is an intramembrane region (discontinuously helical). Positions 69-71 (NPA) match the NPA 1 motif. Residues 75 to 87 (ALLVGNQISLLRA) are Cytoplasmic-facing. The helical transmembrane segment at 88 to 108 (FFYVAAQLVGAIAGAGILYGV) threads the bilayer. Over 109-126 (APLNARGNLAVNALNNNT) the chain is Extracellular. Residues Asn124 and Asn125 are each glycosylated (N-linked (GlcNAc...) asparagine). Residues 127 to 147 (TQGQAMVVELILTFQLALCIF) form a helical membrane-spanning segment. The Cytoplasmic portion of the chain corresponds to 148–158 (ASTDSRRTSPV). Residues 159–179 (GSPALSIGLSVTLGHLVGIYF) form a helical membrane-spanning segment. Thr180 is a topological domain (extracellular). An intramembrane region (discontinuously helical) is located at residues 181–191 (GCSMNPARSFG). The NPA 2 signature appears at 185–187 (NPA). Residues 192–203 (PAVVMNRFSPAH) are Extracellular-facing. Residues 204 to 224 (WVFWVGPIVGAVLAAILYFYL) traverse the membrane as a helical segment. The Cytoplasmic portion of the chain corresponds to 225 to 265 (LFPNSLSLSERVAIIKGTYEPDEDWEEQREERKKTMELTTR).

It belongs to the MIP/aquaporin (TC 1.A.8) family. Homotetramer; each monomer provides an independent water pore. Interacts with TRPV4; the interaction is probably indirect and regulates TRPV4 activation by hypotonicity. In terms of tissue distribution, detected in skin eccrine sweat glands, at the apical cell membrane and at intercellular canaliculi (at protein level).

The protein resides in the apical cell membrane. It localises to the cell membrane. It is found in the cytoplasmic vesicle membrane. The catalysed reaction is H2O(in) = H2O(out). Its function is as follows. Aquaporins form homotetrameric transmembrane channels, with each monomer independently mediating water transport across the plasma membrane along its osmotic gradient. Plays an important role in fluid secretion in salivary glands. Required for TRPV4 activation by hypotonicity. Together with TRPV4, controls regulatory volume decrease in salivary epithelial cells. Seems to play a redundant role in water transport in the eye, lung and in sweat glands. The protein is Aquaporin-5 of Homo sapiens (Human).